The chain runs to 503 residues: ESX-5 secretion system protein EccD5 (503 aa).

The next 11 helical transmembrane spans lie at 137-157 (IVAV…ATGV), 169-189 (LTTI…MLLL), 200-220 (VADI…AAAP), 224-244 (VGSP…ALAL), 250-270 (RLGI…AALA), 272-292 (MVAA…CVVA), 359-379 (FLSG…TSLC), 382-402 (HTGQ…FLLL), 413-433 (SITL…RYAL), 439-459 (LAVS…MAAA), and 480-500 (YLCL…YAAI).

Belongs to the EccD/Snm4 family. Part of the ESX-5 / type VII secretion system (T7SS), which is composed of cytosolic and membrane components. The ESX-5 membrane complex is composed of EccB5, EccC5, EccD5 and EccE5.

Its subcellular location is the cell inner membrane. Part of the ESX-5 specialized secretion system, which is responsible for the secretion of EsxN and a number of PE_PGRS and PPE proteins, including PPE41. The sequence is that of ESX-5 secretion system protein EccD5 from Mycobacterium tuberculosis (strain CDC 1551 / Oshkosh).